The sequence spans 441 residues: Probable pyridine nucleotide-disulfide oxidoreductase RclA (441 aa).

Residue 33 to 43 (EQSNAMYGGTC) participates in FAD binding. The cysteines at positions 43 and 48 are disulfide-linked. The Proton acceptor role is filled by H426.

Belongs to the class-I pyridine nucleotide-disulfide oxidoreductase family. Requires FAD as cofactor.

Probably involved in reactive chlorine species (RCS) stress resistance. In Escherichia coli (strain K12), this protein is Probable pyridine nucleotide-disulfide oxidoreductase RclA (rclA).